The following is a 493-amino-acid chain: Guanosine-5'-triphosphate,3'-diphosphate pyrophosphatase (493 aa).

It belongs to the GppA/Ppx family. GppA subfamily.

The enzyme catalyses guanosine 3'-diphosphate 5'-triphosphate + H2O = guanosine 3',5'-bis(diphosphate) + phosphate + H(+). The protein operates within purine metabolism; ppGpp biosynthesis; ppGpp from GTP: step 2/2. Functionally, catalyzes the conversion of pppGpp to ppGpp. Guanosine pentaphosphate (pppGpp) is a cytoplasmic signaling molecule which together with ppGpp controls the 'stringent response', an adaptive process that allows bacteria to respond to amino acid starvation, resulting in the coordinated regulation of numerous cellular activities. The chain is Guanosine-5'-triphosphate,3'-diphosphate pyrophosphatase from Salmonella agona (strain SL483).